Consider the following 115-residue polypeptide: Phosphorelay protein LuxU (115 aa).

Residues 17 to 107 form the HPt domain; it reads GADNVPVLLE…DRLHQTQQAY (91 aa). Phosphohistidine is present on H56.

In terms of assembly, monomer.

In terms of biological role, phosphorelay protein which receives a sensory signal from a sensor kinase and transmit it to LuxO. At low cell density, a phosphoryl group is transferred from the sensor kinase, probably on His-56 and this phosphoryl group is further transferred to LuxO. This is Phosphorelay protein LuxU (luxU) from Vibrio vulnificus (strain CMCP6).